The following is a 156-amino-acid chain: Transcription elongation factor GreA (156 aa).

Residues Ala2–Asp78 are a coiled coil.

The protein belongs to the GreA/GreB family.

Its function is as follows. Necessary for efficient RNA polymerase transcription elongation past template-encoded arresting sites. The arresting sites in DNA have the property of trapping a certain fraction of elongating RNA polymerases that pass through, resulting in locked ternary complexes. Cleavage of the nascent transcript by cleavage factors such as GreA or GreB allows the resumption of elongation from the new 3'terminus. GreA releases sequences of 2 to 3 nucleotides. In Mesoplasma florum (strain ATCC 33453 / NBRC 100688 / NCTC 11704 / L1) (Acholeplasma florum), this protein is Transcription elongation factor GreA.